An 89-amino-acid polypeptide reads, in one-letter code: Small ribosomal subunit protein uS15 (89 aa).

It belongs to the universal ribosomal protein uS15 family. Part of the 30S ribosomal subunit. Forms a bridge to the 50S subunit in the 70S ribosome, contacting the 23S rRNA.

One of the primary rRNA binding proteins, it binds directly to 16S rRNA where it helps nucleate assembly of the platform of the 30S subunit by binding and bridging several RNA helices of the 16S rRNA. Its function is as follows. Forms an intersubunit bridge (bridge B4) with the 23S rRNA of the 50S subunit in the ribosome. The chain is Small ribosomal subunit protein uS15 from Roseiflexus castenholzii (strain DSM 13941 / HLO8).